Reading from the N-terminus, the 175-residue chain is Disulfide bond formation protein B (175 aa).

Residues 1-13 (MTAFTRFAHSRAS) lie on the Cytoplasmic side of the membrane. The chain crosses the membrane as a helical span at residues 14–30 (WFILTGSAIALEAAALY). The Periplasmic portion of the chain corresponds to 31-48 (FQYVMKLDPCVMCIYQRL). A disulfide bond links cysteine 40 and cysteine 43. Residues 49–64 (AVFGILASGLIGMTAP) form a helical membrane-spanning segment. Residues 65 to 71 (KFLIVRI) are Cytoplasmic-facing. The chain crosses the membrane as a helical span at residues 72 to 89 (LGAIGWAVSATWGLKLAL). Residues 90-144 (ALVDMQNNPSPFSTCSFLPEFPAWMPLHEWFPSVMLPTGMCTDVPWQFMGVTMAE) lie on the Periplasmic side of the membrane. Residues cysteine 104 and cysteine 130 are joined by a disulfide bond. The helical transmembrane segment at 145–163 (WMVVAFSGYLVALLLFIVP) threads the bilayer. The Cytoplasmic segment spans residues 164-175 (ILSGSNKPSLYK).

It belongs to the DsbB family.

It is found in the cell inner membrane. Functionally, required for disulfide bond formation in some periplasmic proteins. Acts by oxidizing the DsbA protein. The protein is Disulfide bond formation protein B of Shewanella sp. (strain ANA-3).